The chain runs to 420 residues: Histidine--tRNA ligase (420 aa).

Belongs to the class-II aminoacyl-tRNA synthetase family. Homodimer.

The protein resides in the cytoplasm. It carries out the reaction tRNA(His) + L-histidine + ATP = L-histidyl-tRNA(His) + AMP + diphosphate + H(+). The polypeptide is Histidine--tRNA ligase (Saccharopolyspora erythraea (strain ATCC 11635 / DSM 40517 / JCM 4748 / NBRC 13426 / NCIMB 8594 / NRRL 2338)).